We begin with the raw amino-acid sequence, 364 residues long: Mannose-1-phosphate guanyltransferase (364 aa).

Belongs to the transferase hexapeptide repeat family.

The protein localises to the cytoplasm. It catalyses the reaction alpha-D-mannose 1-phosphate + GTP + H(+) = GDP-alpha-D-mannose + diphosphate. Its pathway is nucleotide-sugar biosynthesis; GDP-alpha-D-mannose biosynthesis; GDP-alpha-D-mannose from alpha-D-mannose 1-phosphate (GTP route): step 1/1. In terms of biological role, involved in cell wall synthesis where it is required for glycosylation. Involved in cell cycle progression through cell-size checkpoint. The sequence is that of Mannose-1-phosphate guanyltransferase (MPG1) from Gibberella zeae (strain ATCC MYA-4620 / CBS 123657 / FGSC 9075 / NRRL 31084 / PH-1) (Wheat head blight fungus).